A 713-amino-acid polypeptide reads, in one-letter code: Transcription activator of gluconeogenesis CPC735_053490 (713 aa).

The tract at residues 1-70 (MTANAINGPV…NAKDPLRPRR (70 aa)) is disordered. A compositionally biased stretch (polar residues) spans 19 to 56 (GDNNKSADTTMADQGTRPESQPQGQNNGAKPQNGQTKP). Positions 77–105 (CFACQRAHLTCGDERPCQRCIKRGIQNAC) form a DNA-binding region, zn(2)-C6 fungal-type. Residues 145-159 (PLTRNGSNSKTNFYP) show a composition bias toward polar residues. Disordered stretches follow at residues 145–229 (PLTR…ASGQ), 274–318 (GAGE…LFGD), 541–564 (GGSSGAMSGVTSRGSFTPRTGMDI), and 623–665 (GTTS…QRKW). Positions 160 to 171 (QQQSSFNNFYQN) are enriched in low complexity. Residues 191–212 (FPSQSPVSPTFNMTANPAASGN) are compositionally biased toward polar residues. The span at 213-229 (QGLPSSLSASNSNASGQ) shows a compositional bias: low complexity. Polar residues-rich tracts occupy residues 295–312 (SGTYTAGSNFGESPTGQP), 541–558 (GGSSGAMSGVTSRGSFTP), and 649–659 (GASNGQSQHSL).

Belongs to the ERT1/acuK family.

It localises to the nucleus. Its function is as follows. Transcription factor which regulates nonfermentable carbon utilization. Activator of gluconeogenetic genes. The sequence is that of Transcription activator of gluconeogenesis CPC735_053490 from Coccidioides posadasii (strain C735) (Valley fever fungus).